The primary structure comprises 351 residues: Heat-inducible transcription repressor HrcA (351 aa).

It belongs to the HrcA family.

In terms of biological role, negative regulator of class I heat shock genes (grpE-dnaK-dnaJ and groELS operons). Prevents heat-shock induction of these operons. This is Heat-inducible transcription repressor HrcA from Mycoplasma pneumoniae (strain ATCC 29342 / M129 / Subtype 1) (Mycoplasmoides pneumoniae).